The chain runs to 380 residues: Cytochrome b (380 aa).

The next 4 membrane-spanning stretches (helical) occupy residues 34 to 54, 78 to 99, 114 to 134, and 179 to 199; these read FGSL…LLAT, WLIR…YLHI, WNTG…GYVL, and FFAL…IHLT. Residues His84 and His98 each contribute to the heme b site. Heme b contacts are provided by His183 and His197. Residue His202 coordinates a ubiquinone. 4 helical membrane-spanning segments follow: residues 227–247, 289–309, 321–341, and 348–368; these read LKDI…ALFS, LGGV…PLLH, LSQL…WVGS, and FIII…ILFP.

The protein belongs to the cytochrome b family. The cytochrome bc1 complex contains 11 subunits: 3 respiratory subunits (MT-CYB, CYC1 and UQCRFS1), 2 core proteins (UQCRC1 and UQCRC2) and 6 low-molecular weight proteins (UQCRH/QCR6, UQCRB/QCR7, UQCRQ/QCR8, UQCR10/QCR9, UQCR11/QCR10 and a cleavage product of UQCRFS1). This cytochrome bc1 complex then forms a dimer. Heme b serves as cofactor.

It is found in the mitochondrion inner membrane. Component of the ubiquinol-cytochrome c reductase complex (complex III or cytochrome b-c1 complex) that is part of the mitochondrial respiratory chain. The b-c1 complex mediates electron transfer from ubiquinol to cytochrome c. Contributes to the generation of a proton gradient across the mitochondrial membrane that is then used for ATP synthesis. The sequence is that of Cytochrome b (MT-CYB) from Ciconia ciconia (White stork).